The following is a 301-amino-acid chain: MKNKAFGQIMDDAENPGFFKILRSADLSSEIMRGIPLNFIKSISEEELSAKMLLKVSWGSSWPIKICRNPSFYFMEKKGWDQFLSDNGLGNDEFLTFTHQGNMCFTVDIYQIDGKELLTPRRSATIASSSGRNKREQRNNIYKDVKEEEDIESWSESSYPGHKTAESTGRRQRLSLSNKKAKETEKSKKKKMKVESISYDSQDDSLSLVPEFTLTIKKSYLIFLGIPKMFEELHMPTEATMFKIHDPEGKRSWDVMYKFSNNQTRFCAGWIRLAKELGLEIGDVCTFTLIKPTEMLVRVSK.

A DNA-binding region (TF-B3 1) is located at residues 18–113; that stretch reads FFKILRSADL…CFTVDIYQID (96 aa). 2 disordered regions span residues 123–142 and 153–194; these read SATI…NNIY and SWSE…KMKV. The span at 133–142 shows a compositional bias: basic and acidic residues; sequence NKREQRNNIY. A DNA-binding region (TF-B3 2) is located at residues 209–301; the sequence is VPEFTLTIKK…PTEMLVRVSK (93 aa).

The protein resides in the nucleus. The protein is B3 domain-containing protein At5g18090 of Arabidopsis thaliana (Mouse-ear cress).